Reading from the N-terminus, the 838-residue chain is MSLQVLNDKNVSNEKNTENCDFLFSPPEVTGRSSVLRVSQKENVPPKNLAKAMKVTFQTPLRDPQTHRILSPSMASKLEAPFTQDDTLGLENSHPVWTQKENQQLIKEVDAKTTHGILQKPVEADTDLLGDASPAFGSGSSSESGPGALADLDCSSSSQSPGSSENQMVSPGKVSGSPEQAVEENLSSYSLDRRVTPASETLEDPCRTESQHKAETPHGAEEECKAETPHGAEEECRHGGVCAPAAVATSPPGAIPKEACGGAPLQGLPGEALGCPAGVGTPVPADGTQTLTCAHTSAPESTAPTNHLVAGRAMTLSPQEEVAAGQMASSSRSGPVKLEFDVSDGATSKRAPPPRRLGERSGLKPPLRKAAVRQQKAPQEVEEDDGRSGAGEDPPMPASRGSYHLDWDKMDDPNFIPFGGDTKSGCSEAQPPESPETRLGQPAAEQLHAGPATEEPGPCLSQQLHSASAEDTPVVQLAAETPTAESKERALNSASTSLPTSCPGSEPVPTHQQGQPALELKEESFRDPAEVLGTGAEVDYLEQFGTSSFKESALRKQSLYLKFDPLLRDSPGRPVPVATETSSMHGANETPSGRPREAKLVEFDFLGALDIPVPGPPPGVPAPGGPPLSTGPIVDLLQYSQKDLDAVVKATQEENRELRSRCEELHGKNLELGKIMDRFEEVVYQAMEEVQKQKELSKAEIQKVLKEKDQLTTDLNSMEKSFSDLFKRFEKQKEVIEGYRKNEESLKKCVEDYLARITQEGQRYQALKAHAEEKLQLANEEIAQVRSKAQAEALALQASLRKEQMRIQSLEKTVEQKTKENEELTRICDDLISKMEKI.

At Ser-2 the chain carries N-acetylserine. A phosphoserine mark is found at Ser-25, Ser-39, and Ser-71. A disordered region spans residues 123–227; the sequence is EADTDLLGDA…HGAEEECKAE (105 aa). A compositionally biased stretch (low complexity) spans 132 to 164; it reads ASPAFGSGSSSESGPGALADLDCSSSSQSPGSS. Phosphoserine is present on residues Ser-175 and Ser-177. Over residues 204 to 227 the composition is skewed to basic and acidic residues; it reads DPCRTESQHKAETPHGAEEECKAE. Phosphoserine is present on residues Ser-250, Ser-317, and Ser-402. The segment at 311–527 is disordered; that stretch reads GRAMTLSPQE…LELKEESFRD (217 aa). Over residues 403–412 the composition is skewed to basic and acidic residues; it reads YHLDWDKMDD. Ser-434 bears the Phosphoserine mark. Residues 492–503 show a composition bias toward polar residues; the sequence is NSASTSLPTSCP. The necessary but not sufficient for spindle localization stretch occupies residues 522-577; that stretch reads EESFRDPAEVLGTGAEVDYLEQFGTSSFKESALRKQSLYLKFDPLLRDSPGRPVPV. A Phosphoserine; by AURKA modification is found at Ser-558. The disordered stretch occupies residues 569–594; that stretch reads DSPGRPVPVATETSSMHGANETPSGR. Polar residues predominate over residues 579 to 591; the sequence is TETSSMHGANETP. The tract at residues 594 to 838 is necessary but not sufficient for spindle localization; sequence RPREAKLVEF…DDLISKMEKI (245 aa). Positions 637 to 837 form a coiled coil; the sequence is LQYSQKDLDA…CDDLISKMEK (201 aa).

It belongs to the TACC family. As to quaternary structure, interacts with microtubules. Interacts with CKAP5 independently of clathrin. Interacts with CKAP5 and clathrin forming the TACC3/ch-TOG/clathrin complex located at spindle inter-microtubules bridges; TACC3 (phosphorylated at Ser-558 by AURKA) and CLTC are proposed to form a composite microtubule interaction surface. Interacts with CCDC100/CEP120. The coiled coil C-terminal region interacts with AH receptor nuclear translocator protein (ARNT) and ARNT2. Interacts with GCN5L2 and PCAF.

It is found in the cytoplasm. The protein resides in the cytoskeleton. Its subcellular location is the microtubule organizing center. The protein localises to the centrosome. It localises to the spindle. It is found in the spindle pole. In terms of biological role, plays a role in the microtubule-dependent coupling of the nucleus and the centrosome. Involved in the processes that regulate centrosome-mediated interkinetic nuclear migration (INM) of neural progenitors. Acts as a component of the TACC3/ch-TOG/clathrin complex proposed to contribute to stabilization of kinetochore fibers of the mitotic spindle by acting as inter-microtubule bridge. The TACC3/ch-TOG/clathrin complex is required for the maintenance of kinetochore fiber tension. May be involved in the control of cell growth and differentiation. May contribute to cancer. This Homo sapiens (Human) protein is Transforming acidic coiled-coil-containing protein 3 (TACC3).